Here is a 670-residue protein sequence, read N- to C-terminus: Pescadillo homolog (670 aa).

Residues Gly292–Phe321 are a coiled coil. The 87-residue stretch at Lys316 to Ile402 folds into the BRCT domain. Residues Arg643–Gln670 are disordered. The span at Gln644–Tyr662 shows a compositional bias: basic and acidic residues.

Belongs to the pescadillo family.

It localises to the nucleus. The protein localises to the nucleolus. Its subcellular location is the nucleoplasm. Its function is as follows. Required for maturation of ribosomal RNAs and formation of the large ribosomal subunit. This chain is Pescadillo homolog, found in Leishmania braziliensis.